Here is an 859-residue protein sequence, read N- to C-terminus: Anoctamin-7 (859 aa).

Over 1–297 (MLRGQAREED…YFAWLGFYTG (297 aa)) the chain is Cytoplasmic. Residues 25–50 (GCSYGSTAQASEAGKQQVAPSRVGSS) are disordered. A helical membrane pass occupies residues 298-318 (WLLPAAVVGTVVFLVGCFLVF). Topologically, residues 319–362 (SDIPTQELCHSSDSFDMCPLCSDCSFWLLSSACTLAQAGRLFDH) are extracellular. Residues 363 to 383 (GGTVFFSLFMALWAVLLLEYW) form a helical membrane-spanning segment. Residues 384 to 441 (KRKNATLAYRWDCSDYEDIEERPRPQFAATAPMTALNPITGEDEPYFPEKNRVRRMLA) lie on the Cytoplasmic side of the membrane. A helical transmembrane segment spans residues 442–462 (GSVVLLMMVAVVIMCLVSVIL). The Extracellular portion of the chain corresponds to 463-492 (YRAVMAIIVSRSDNAFLSAWASRIASLTGS). Residues 493–513 (VVNLVFILILSKVYVLLAQVL) traverse the membrane as a helical segment. The Cytoplasmic segment spans residues 514–530 (TRWEMHRTQTEFEDAFT). A helical membrane pass occupies residues 531–551 (LKVFIFQFVNFYASPVYIAFF). Residues 552–651 (KGRFVGYPGN…FHEYLEMVLQ (100 aa)) are Extracellular-facing. Residues 652–672 (FGFVTIFVAACPLAPLFALLN) traverse the membrane as a helical segment. Residues 673–700 (NWVEIRLDARKFVCEYRRPVAERAQDIG) lie on the Cytoplasmic side of the membrane. A helical membrane pass occupies residues 701 to 721 (IWFHILTGLTHLAVISNAFLL). Residues 722–780 (AFSSDFLPRVYYSWTHAPDLHGFLNFTLARAPPTFTSAHNRTCRYRAFRDDDGHYSPTY) lie on the Extracellular side of the membrane. N-linked (GlcNAc...) asparagine glycosylation is found at N746 and N761. Residues 781–801 (WTLLAIRLAFVIVFEHVVFSI) traverse the membrane as a helical segment. Residues 802–859 (GRVLDLLVPDIPESVEIKVKREYYLAKQALAENEALLGATGVKDDQPPSSEPSLGLPA) are Cytoplasmic-facing.

This sequence belongs to the anoctamin family. In terms of tissue distribution, highly expressed in the stomach. Expressed at low levels in small intestine and large intestine.

The protein localises to the cell membrane. The protein resides in the endoplasmic reticulum. The enzyme catalyses a 1,2-diacyl-sn-glycero-3-phospho-L-serine(in) = a 1,2-diacyl-sn-glycero-3-phospho-L-serine(out). It catalyses the reaction a beta-D-galactosyl-(1&lt;-&gt;1')-N-acylsphing-4-enine(out) = a beta-D-galactosyl-(1&lt;-&gt;1')-N-acylsphing-4-enine(in). The catalysed reaction is a 1,2-diacyl-sn-glycero-3-phosphocholine(in) = a 1,2-diacyl-sn-glycero-3-phosphocholine(out). Has calcium-dependent phospholipid scramblase activity; scrambles phosphatidylserine, phosphatidylcholine and galactosylceramide. Does not exhibit calcium-activated chloride channel (CaCC) activity. May play a role in cell-cell interactions. This is Anoctamin-7 (Ano7) from Mus musculus (Mouse).